The following is a 468-amino-acid chain: ATP-dependent protease ATPase subunit HslU (468 aa).

Residues Val-22 and 64–69 (GVGKTE) contribute to the ATP site. The disordered stretch occupies residues 166–187 (FGNNDEEDEEPPTEDIKTKRSE). Residues 169–178 (NDEEDEEPPT) show a composition bias toward acidic residues. ATP contacts are provided by Asp-281, Glu-346, and Arg-418.

Belongs to the ClpX chaperone family. HslU subfamily. In terms of assembly, a double ring-shaped homohexamer of HslV is capped on each side by a ring-shaped HslU homohexamer. The assembly of the HslU/HslV complex is dependent on binding of ATP.

It is found in the cytoplasm. Functionally, ATPase subunit of a proteasome-like degradation complex; this subunit has chaperone activity. The binding of ATP and its subsequent hydrolysis by HslU are essential for unfolding of protein substrates subsequently hydrolyzed by HslV. HslU recognizes the N-terminal part of its protein substrates and unfolds these before they are guided to HslV for hydrolysis. This chain is ATP-dependent protease ATPase subunit HslU, found in Staphylococcus carnosus (strain TM300).